Here is a 119-residue protein sequence, read N- to C-terminus: Large ribosomal subunit protein uL18 (119 aa).

Belongs to the universal ribosomal protein uL18 family. In terms of assembly, part of the 50S ribosomal subunit; part of the 5S rRNA/L5/L18/L25 subcomplex. Contacts the 5S and 23S rRNAs.

Its function is as follows. This is one of the proteins that bind and probably mediate the attachment of the 5S RNA into the large ribosomal subunit, where it forms part of the central protuberance. The sequence is that of Large ribosomal subunit protein uL18 from Legionella pneumophila (strain Paris).